Here is a 353-residue protein sequence, read N- to C-terminus: Regulatory protein ada (353 aa).

Residue Thr-34 coordinates DNA. Cys-38 functions as the Nucleophile; methyl group acceptor from phosphotriester in the catalytic mechanism. Zn(2+) is bound by residues Cys-38 and Cys-42. 2 residues coordinate DNA: Arg-43 and Arg-67. Zn(2+) is bound by residues Cys-69 and Cys-72. The HTH araC/xylS-type domain occupies 94 to 183 (LEQETPVTLA…GMTAKQFRKG (90 aa)). DNA-binding regions (H-T-H motif) lie at residues 103-124 (AFLAQAVAMSPFHLHRLFKAST) and 150-173 (ITAAIYRAGFPDSSSYYRHADQTL). Cys-321 serves as the catalytic Nucleophile; methyl group acceptor.

The protein in the C-terminal section; belongs to the MGMT family. Zn(2+) serves as cofactor.

It carries out the reaction a 6-O-methyl-2'-deoxyguanosine in DNA + L-cysteinyl-[protein] = S-methyl-L-cysteinyl-[protein] + a 2'-deoxyguanosine in DNA. The enzyme catalyses a 4-O-methyl-thymidine in DNA + L-cysteinyl-[protein] = a thymidine in DNA + S-methyl-L-cysteinyl-[protein]. Its function is as follows. Involved in the cellular defense against the biological effects of O6-methylguanine (O6-MeG) and O4-methylthymine (O4-MeT) in DNA. Repairs the methylated nucleobase in DNA by stoichiometrically transferring the methyl group to a cysteine residue in the enzyme. This is a suicide reaction: the enzyme is irreversibly inactivated. In terms of biological role, the methylated ADA protein acts as a positive regulator of its own synthesis, as well as that of other proteins. The transcription-activating function of the ADA protein resides in its N-terminus. It activates the transcription of alkA, alkB and aidB. This is Regulatory protein ada (ada) from Salmonella typhimurium (strain LT2 / SGSC1412 / ATCC 700720).